A 500-amino-acid polypeptide reads, in one-letter code: Glycerol kinase (500 aa).

An ADP-binding site is contributed by Thr13. 3 residues coordinate ATP: Thr13, Thr14, and Ser15. Thr13 provides a ligand contact to sn-glycerol 3-phosphate. Arg17 contributes to the ADP binding site. Sn-glycerol 3-phosphate-binding residues include Arg83, Glu84, Tyr135, and Asp244. Arg83, Glu84, Tyr135, Asp244, and Gln245 together coordinate glycerol. The ADP site is built by Thr266 and Gly309. Positions 266, 309, 313, and 410 each coordinate ATP. Residues Gly410 and Asn414 each contribute to the ADP site.

Belongs to the FGGY kinase family.

The enzyme catalyses glycerol + ATP = sn-glycerol 3-phosphate + ADP + H(+). It functions in the pathway polyol metabolism; glycerol degradation via glycerol kinase pathway; sn-glycerol 3-phosphate from glycerol: step 1/1. Its activity is regulated as follows. Inhibited by fructose 1,6-bisphosphate (FBP). Key enzyme in the regulation of glycerol uptake and metabolism. Catalyzes the phosphorylation of glycerol to yield sn-glycerol 3-phosphate. The protein is Glycerol kinase of Burkholderia multivorans (strain ATCC 17616 / 249).